The following is a 262-amino-acid chain: uncharacterized protein (262 aa).

This sequence belongs to the BtpA family.

This is an uncharacterized protein from Pyrococcus furiosus (strain ATCC 43587 / DSM 3638 / JCM 8422 / Vc1).